The sequence spans 638 residues: Phosphomethylpyrimidine synthase (638 aa).

Residues Asn236, Met265, Tyr294, His330, 350–352, 391–394, and Glu430 contribute to the substrate site; these read SRG and DGLR. His434 lines the Zn(2+) pocket. Residue Tyr457 coordinates substrate. Residue His498 coordinates Zn(2+). Positions 578, 581, and 586 each coordinate [4Fe-4S] cluster. Residues 608 to 624 are compositionally biased toward low complexity; the sequence is AEGASQQEAEQGMQEMS. A disordered region spans residues 608–633; that stretch reads AEGASQQEAEQGMQEMSQKYKDAGRR.

The protein belongs to the ThiC family. In terms of assembly, homodimer. [4Fe-4S] cluster is required as a cofactor.

It catalyses the reaction 5-amino-1-(5-phospho-beta-D-ribosyl)imidazole + S-adenosyl-L-methionine = 4-amino-2-methyl-5-(phosphooxymethyl)pyrimidine + CO + 5'-deoxyadenosine + formate + L-methionine + 3 H(+). The protein operates within cofactor biosynthesis; thiamine diphosphate biosynthesis. Catalyzes the synthesis of the hydroxymethylpyrimidine phosphate (HMP-P) moiety of thiamine from aminoimidazole ribotide (AIR) in a radical S-adenosyl-L-methionine (SAM)-dependent reaction. This chain is Phosphomethylpyrimidine synthase, found in Hahella chejuensis (strain KCTC 2396).